We begin with the raw amino-acid sequence, 40 residues long: uncharacterized protein (40 aa).

The span at 1–14 (MNRMLSLSVQSQRA) shows a compositional bias: polar residues. The tract at residues 1-25 (MNRMLSLSVQSQRAPASPSPYGLKI) is disordered.

This is an uncharacterized protein from Treponema pallidum (strain Nichols).